The chain runs to 116 residues: NADPH-dependent 7-cyano-7-deazaguanine reductase (116 aa).

The active-site Thioimide intermediate is the Cys31. Catalysis depends on Asp38, which acts as the Proton donor. Substrate contacts are provided by residues 53–55 (IEL) and 72–73 (YE).

Belongs to the GTP cyclohydrolase I family. QueF type 1 subfamily.

Its subcellular location is the cytoplasm. It carries out the reaction 7-aminomethyl-7-carbaguanine + 2 NADP(+) = 7-cyano-7-deazaguanine + 2 NADPH + 3 H(+). It participates in tRNA modification; tRNA-queuosine biosynthesis. Functionally, catalyzes the NADPH-dependent reduction of 7-cyano-7-deazaguanine (preQ0) to 7-aminomethyl-7-deazaguanine (preQ1). The protein is NADPH-dependent 7-cyano-7-deazaguanine reductase of Pelodictyon phaeoclathratiforme (strain DSM 5477 / BU-1).